A 407-amino-acid polypeptide reads, in one-letter code: Heparan-sulfate 6-O-sulfotransferase 1-B (407 aa).

The Cytoplasmic segment spans residues 8 to 14 (MVERTSK). The helical; Signal-anchor for type II membrane protein transmembrane segment at 15-35 (FLLIVVGSVFFMLILYQYVAP) threads the bilayer. Topologically, residues 36–407 (GVINFGSPHG…DYMNHIINGW (372 aa)) are lumenal. Residue 92 to 100 (HIQKTGGTT) participates in 3'-phosphoadenylyl sulfate binding. Substrate is bound by residues 122–123 (KK), R139, W144, and H149. H149 serves as the catalytic Proton acceptor. 3'-phosphoadenylyl sulfate-binding residues include R183 and S191. Substrate contacts are provided by H195 and W202. The N-linked (GlcNAc...) asparagine glycan is linked to N262. 315–317 (MQY) contributes to the 3'-phosphoadenylyl sulfate binding site. N318 carries N-linked (GlcNAc...) asparagine glycosylation. A 3'-phosphoadenylyl sulfate-binding site is contributed by 321–322 (RA). The N-linked (GlcNAc...) asparagine glycan is linked to N329.

The protein belongs to the sulfotransferase 6 family. During early somitogenesis, first expressed in floor plate and somites. During mid-somitogenesis, expressed strongly in somites and more weakly in eye and hindbrain. During late somitogenesis, expressed in eye, hindbrain and posterior somites. At 24 hours post-fertilization (hpf), expressed in lens, forebrain, hindbrain, otic vesicle, anterior spinal cord neurons and posterior somites. At 36 hpf, expressed in the retinal ciliary marginal zone, brain, pancreas and weakly in pectoral fin. At 48 hpf, expressed in the retinal ciliary marginal zone, retinal ganglion cells, rhombomeres, otic vesicle and weakly in pectoral fin.

It is found in the membrane. It carries out the reaction alpha-D-glucosaminyl-[heparan sulfate](n) + 3'-phosphoadenylyl sulfate = 6-sulfo-alpha-D-glucosaminyl-[heparan sulfate](n) + adenosine 3',5'-bisphosphate + H(+). 6-O-sulfation enzyme which catalyzes the transfer of sulfate from 3'-phosphoadenosine 5'-phosphosulfate (PAPS) to position 6 of the N-sulfoglucosamine residue (GlcNS) of heparan sulfate. This Danio rerio (Zebrafish) protein is Heparan-sulfate 6-O-sulfotransferase 1-B.